Consider the following 116-residue polypeptide: MTFEMLYSKIHRATITDANLNYVGSITIDENLAKLAKLREGMKVEIVNINNGERFSTYVILGKKRGEICVNGAAARKVAIGDVVIILAYASMNEDEMNVHKPCIVLVNEKNEILEK.

The Schiff-base intermediate with substrate; via pyruvic acid role is filled by Ser-25. Pyruvic acid (Ser) is present on Ser-25. Thr-57 is a binding site for substrate. Tyr-58 serves as the catalytic Proton donor. 72–74 (GAA) contacts substrate.

This sequence belongs to the PanD family. Heterooctamer of four alpha and four beta subunits. It depends on pyruvate as a cofactor. In terms of processing, is synthesized initially as an inactive proenzyme, which is activated by self-cleavage at a specific serine bond to produce a beta-subunit with a hydroxyl group at its C-terminus and an alpha-subunit with a pyruvoyl group at its N-terminus.

It localises to the cytoplasm. The catalysed reaction is L-aspartate + H(+) = beta-alanine + CO2. It participates in cofactor biosynthesis; (R)-pantothenate biosynthesis; beta-alanine from L-aspartate: step 1/1. Its function is as follows. Catalyzes the pyruvoyl-dependent decarboxylation of aspartate to produce beta-alanine. The protein is Aspartate 1-decarboxylase of Helicobacter acinonychis (strain Sheeba).